The chain runs to 235 residues: 7-cyano-7-deazaguanine synthase (235 aa).

Residue 13 to 23 (FSGGLDSTTCL) coordinates ATP. 4 residues coordinate Zn(2+): Cys-197, Cys-207, Cys-210, and Cys-213.

This sequence belongs to the QueC family. Requires Zn(2+) as cofactor.

The enzyme catalyses 7-carboxy-7-deazaguanine + NH4(+) + ATP = 7-cyano-7-deazaguanine + ADP + phosphate + H2O + H(+). Its pathway is purine metabolism; 7-cyano-7-deazaguanine biosynthesis. Its function is as follows. Catalyzes the ATP-dependent conversion of 7-carboxy-7-deazaguanine (CDG) to 7-cyano-7-deazaguanine (preQ(0)). This Solidesulfovibrio magneticus (strain ATCC 700980 / DSM 13731 / RS-1) (Desulfovibrio magneticus) protein is 7-cyano-7-deazaguanine synthase.